We begin with the raw amino-acid sequence, 552 residues long: Leucine-rich repeat-containing protein 56 (552 aa).

5 LRR repeats span residues 94-115 (NLIQLKLNHSYLGSLRDLGTSL), 117-138 (HLQVLWLARCGLTDLDGIGSFL), 139-160 (ELKELYVSYNNISDLSPLCLLE), 161-182 (QLEVLDLEGNNVEDLGQMRYLQ), and 186-206 (RLAMLTLEGNLVCLKPDPGPS). Disordered stretches follow at residues 348–375 (APLEQMPPHRPDLAIRPSTPRPDPAESC) and 401–435 (QQERSAQVQAQDPQKDPVEQEDQTGPKTSLTPPRL).

The protein belongs to the LRRC56 family. Interacts with IFT88.

The protein localises to the cell projection. It is found in the cilium. Functionally, required for the assembly of dynein arms. In Mus musculus (Mouse), this protein is Leucine-rich repeat-containing protein 56 (Lrrc56).